The primary structure comprises 117 residues: MKNKLLQLVEQNQIRKDLPNFNTGDNVKVHLRIKEENKERIQIFEGLVIAKDGPGKGLSQSFKVRKISSGIGVEKDFPLNSPIISAIEVIRRNKVRRKKLYYIRNKSGKSARLKEKK.

This sequence belongs to the bacterial ribosomal protein bL19 family.

Its function is as follows. This protein is located at the 30S-50S ribosomal subunit interface and may play a role in the structure and function of the aminoacyl-tRNA binding site. This Mycoplasmopsis pulmonis (strain UAB CTIP) (Mycoplasma pulmonis) protein is Large ribosomal subunit protein bL19.